We begin with the raw amino-acid sequence, 547 residues long: T-complex protein 1 subunit alpha (547 aa).

It belongs to the TCP-1 chaperonin family. In terms of assembly, heterooligomeric complex of about 850 to 900 kDa that forms two stacked rings, 12 to 16 nm in diameter.

It localises to the cytoplasm. Molecular chaperone; assists the folding of proteins upon ATP hydrolysis. Known to play a role, in vitro, in the folding of actin and tubulin. The sequence is that of T-complex protein 1 subunit alpha from Tetrahymena pyriformis.